We begin with the raw amino-acid sequence, 134 residues long: Translation initiation factor 2 subunit beta (134 aa).

This sequence belongs to the eIF-2-beta/eIF-5 family. Heterotrimer composed of an alpha, a beta and a gamma chain.

Its function is as follows. eIF-2 functions in the early steps of protein synthesis by forming a ternary complex with GTP and initiator tRNA. In Pyrobaculum aerophilum (strain ATCC 51768 / DSM 7523 / JCM 9630 / CIP 104966 / NBRC 100827 / IM2), this protein is Translation initiation factor 2 subunit beta.